A 351-amino-acid polypeptide reads, in one-letter code: Cyanuric acid amidohydrolase (351 aa).

Residues 1–96 form an RU A region; sequence MPSLRAHVFR…HWTVFARETV (96 aa). Residues R53 and 77 to 78 each bind substrate; that span reads SG. The segment at 103 to 240 is RU B; that stretch reads ALAIGVSRTP…HEIIVLGMSA (138 aa). Residue K153 is part of the active site. Substrate-binding positions include R185 and 223–224; that span reads SS. S223 (nucleophile) is an active-site residue. The tract at residues 246 to 351 is RU C; that stretch reads LSIDHAVMRD…PVAIIVEKEQ (106 aa). Position 283 (E283) interacts with Mg(2+). Substrate is bound by residues R310 and 329 to 330; that span reads SG. Mg(2+) is bound by residues A332, Q335, G336, P337, and G340.

This sequence belongs to the cyclic amide hydrolase (CyAH) family. In terms of assembly, homotetramer.

The enzyme catalyses cyanurate + H2O = 1-carboxybiuret + H(+). Its pathway is xenobiotic degradation; atrazine degradation; biuret from cyanurate: step 1/1. Inhibited by barbituric acid. Its function is as follows. Responsible for the hydrolysis of cyanuric acid, an intermediate formed during catabolism of s-triazine based compounds in herbicides such as atrazine and polymers such as melamine. Catalyzes the hydrolytic opening of the s-triazine ring of cyanuric acid (2,4,6-trihydroxy-s-triazine) to yield carbon dioxide and carboxybiuret, which spontaneously decarboxylates to biuret. In Rhizobium johnstonii (strain DSM 114642 / LMG 32736 / 3841) (Rhizobium leguminosarum bv. viciae), this protein is Cyanuric acid amidohydrolase.